We begin with the raw amino-acid sequence, 439 residues long: MKKLYLKTHGCQMNEYDSAKMADVLKFSHGLELTEDPAVADVFLLNTCSVREKAQTKVFSELGRWRPFKEKRPHVVIGVGGCVASQEGETILKQAPFVDIVFGPQTLHRLPDLLDSVIQKRKSVVDITFPEIEKFDRLPQPRAEGPSAFVSIMEGCSKYCTFCVVPYTRGEEISRPFDDVIAEVASLCEQGVREITLLGQNVNDYCGLMHDGQVADLALLIHYLAAMDNIERIRFTTSHPSAFSENLIDAYAEEPKLANHLHLPVQSGSDRILAAMKRNYTVLEYKSKIRKLRAVRPDISLSSDFIIGFPGETDADFEATMNLIHDMGFDHSFSFIYSPRPGTPAAQLPDDVPMAVKKERLAILQNRINVKAAEISQSMVGTQQRILVTGPSKKYPDQLSGRTENNRVVNFNGDTPLIGQMVTIKIKEARPYSLWGEIC.

Positions 2–119 (KKLYLKTHGC…LPDLLDSVIQ (118 aa)) constitute an MTTase N-terminal domain. 6 residues coordinate [4Fe-4S] cluster: C11, C48, C82, C156, C160, and C163. In terms of domain architecture, Radical SAM core spans 142–374 (RAEGPSAFVS…QNRINVKAAE (233 aa)). Residues 377–439 (QSMVGTQQRI…RPYSLWGEIC (63 aa)) enclose the TRAM domain.

Belongs to the methylthiotransferase family. MiaB subfamily. In terms of assembly, monomer. The cofactor is [4Fe-4S] cluster.

The protein resides in the cytoplasm. It carries out the reaction N(6)-dimethylallyladenosine(37) in tRNA + (sulfur carrier)-SH + AH2 + 2 S-adenosyl-L-methionine = 2-methylsulfanyl-N(6)-dimethylallyladenosine(37) in tRNA + (sulfur carrier)-H + 5'-deoxyadenosine + L-methionine + A + S-adenosyl-L-homocysteine + 2 H(+). Catalyzes the methylthiolation of N6-(dimethylallyl)adenosine (i(6)A), leading to the formation of 2-methylthio-N6-(dimethylallyl)adenosine (ms(2)i(6)A) at position 37 in tRNAs that read codons beginning with uridine. The chain is tRNA-2-methylthio-N(6)-dimethylallyladenosine synthase from Coxiella burnetii (strain Dugway 5J108-111).